A 230-amino-acid polypeptide reads, in one-letter code: Dickkopf-like protein 1 (230 aa).

A signal peptide spans 1-20 (MCRLRVLLLLLPLAFVSSSA). 3 N-linked (GlcNAc...) asparagine glycosylation sites follow: Asn-31, Asn-87, and Asn-102.

Interacts with SLXL1; Co-localize in seminiferous tubules. Interacts with SLY. N-glycosylated during spermatogenesis. Not N-glycosylated in mature sperm. Testis-specific. Abundant in the seminiferous tubules where it is associated with developing spermatocytes. Expressed only in testis (at protein level). Not detectable on postnatal days 4 and 9 but after day 18 it gradually increased as the development of testes progressed. Expressed at high levels in testis and at weak levels in epididymis.

The protein resides in the secreted. It is found in the cytoplasmic vesicle. It localises to the secretory vesicle. The protein localises to the acrosome. Functionally, involved in fertilization by facilitating sperm penetration of the zona pellucida. May promote spermatocyte apoptosis, thereby limiting sperm production. In adults, may reduce testosterone synthesis in Leydig cells. Is not essential either for development or fertility. This Mus musculus (Mouse) protein is Dickkopf-like protein 1.